The sequence spans 386 residues: Succinate--CoA ligase [ADP-forming] subunit beta (386 aa).

The ATP-grasp domain occupies 9–244 (KAVLRSYGVS…LDEEDSKEIE (236 aa)). Residues K46, 53–55 (GRG), E99, C102, and E107 contribute to the ATP site. Residues N199 and D213 each coordinate Mg(2+). Residues N264 and 321 to 323 (GIM) contribute to the substrate site.

It belongs to the succinate/malate CoA ligase beta subunit family. In terms of assembly, heterotetramer of two alpha and two beta subunits. Requires Mg(2+) as cofactor.

It catalyses the reaction succinate + ATP + CoA = succinyl-CoA + ADP + phosphate. It carries out the reaction GTP + succinate + CoA = succinyl-CoA + GDP + phosphate. It functions in the pathway carbohydrate metabolism; tricarboxylic acid cycle; succinate from succinyl-CoA (ligase route): step 1/1. Functionally, succinyl-CoA synthetase functions in the citric acid cycle (TCA), coupling the hydrolysis of succinyl-CoA to the synthesis of either ATP or GTP and thus represents the only step of substrate-level phosphorylation in the TCA. The beta subunit provides nucleotide specificity of the enzyme and binds the substrate succinate, while the binding sites for coenzyme A and phosphate are found in the alpha subunit. In Bacillus cereus (strain ATCC 14579 / DSM 31 / CCUG 7414 / JCM 2152 / NBRC 15305 / NCIMB 9373 / NCTC 2599 / NRRL B-3711), this protein is Succinate--CoA ligase [ADP-forming] subunit beta.